The chain runs to 36 residues: Pancreatic polypeptide (36 aa).

Tyr-36 is modified (tyrosine amide).

The protein belongs to the NPY family.

The protein resides in the secreted. Its function is as follows. Hormone secreted by pancreatic cells that acts as a regulator of pancreatic and gastrointestinal functions probably by signaling through the G protein-coupled receptor NPY4R2. The polypeptide is Pancreatic polypeptide (PPY) (Equus przewalskii (Przewalski's horse)).